A 28-amino-acid chain; its full sequence is Dermaseptin-H2 (28 aa).

This sequence belongs to the frog skin active peptide (FSAP) family. Dermaseptin subfamily. Expressed by the skin glands.

Its subcellular location is the secreted. Functionally, possesses a potent antimicrobial activity against Gram-positive and Gram-negative bacteria. Probably acts by disturbing membrane functions with its amphipathic structure. The polypeptide is Dermaseptin-H2 (Pithecopus azureus (Orange-legged monkey tree frog)).